The chain runs to 1939 residues: Myosin-1 (1939 aa).

In terms of domain architecture, Myosin N-terminal SH3-like spans Asp-33–Pro-82. Thr-64 and Thr-69 each carry phosphothreonine. Positions Asp-86–Asp-782 constitute a Myosin motor domain. Position 130 is an N6,N6,N6-trimethyllysine (Lys-130). Residue Gly-179–Thr-186 coordinates ATP. Residue Tyr-389 is modified to Phosphotyrosine. Position 419 is a phosphothreonine (Thr-419). Phosphotyrosine is present on Tyr-424. The actin-binding stretch occupies residues Leu-659–Glu-681. His-757 bears the Pros-methylhistidine mark. Residues Lys-761–Gly-775 are actin-binding. One can recognise an IQ domain in the interval Leu-785–Ser-814. Residues Leu-843–Glu-1939 are a coiled coil. Ser-1092, Ser-1096, Ser-1162, and Ser-1237 each carry phosphoserine. Thr-1241 bears the Phosphothreonine mark. Ser-1243 and Ser-1261 each carry phosphoserine. Thr-1265 and Thr-1286 each carry phosphothreonine. Phosphoserine occurs at positions 1288, 1292, 1303, and 1306. Thr-1467 is subject to Phosphothreonine. Ser-1474 carries the phosphoserine modification. Tyr-1492 is modified (phosphotyrosine). Position 1495 is a phosphoserine (Ser-1495). Thr-1501 carries the phosphothreonine modification. Ser-1514 carries the post-translational modification Phosphoserine. Phosphothreonine is present on Thr-1517. A phosphoserine mark is found at Ser-1542, Ser-1554, Ser-1574, Ser-1600, Ser-1603, Ser-1714, and Ser-1726. 2 positions are modified to phosphothreonine: Thr-1730 and Thr-1736. Ser-1739 carries the phosphoserine modification.

This sequence belongs to the TRAFAC class myosin-kinesin ATPase superfamily. Myosin family. As to quaternary structure, muscle myosin is a hexameric protein that consists of 2 heavy chain subunits (MHC), 2 alkali light chain subunits (MLC) and 2 regulatory light chain subunits (MLC-2). Interacts with SLC26A5.

It is found in the cytoplasm. Its subcellular location is the myofibril. Required for normal hearing. It plays a role in cochlear amplification of auditory stimuli, likely through the positive regulation of prestin (SLC26A5) activity and outer hair cell (OHC) electromotility. This chain is Myosin-1, found in Homo sapiens (Human).